Consider the following 831-residue polypeptide: Serine/threonine-protein kinase ATG1 (831 aa).

Positions 21–321 (YSVEKEIGKG…FTDFFNNEVV (301 aa)) constitute a Protein kinase domain. ATP-binding positions include 27–35 (IGKGSFAVV) and Lys-50. Asp-168 (proton acceptor) is an active-site residue. 2 stretches are compositionally biased toward polar residues: residues 360–382 (QQESAHIPPTQTDENTSVQTGVR) and 405–419 (NSQNPEQSYQSASQK). Residues 360–419 (QQESAHIPPTQTDENTSVQTGVRRTSGKERLATNHPPHQQIHPEDNSQNPEQSYQSASQK) form a disordered region.

It belongs to the protein kinase superfamily. Ser/Thr protein kinase family. APG1/unc-51/ULK1 subfamily. Homodimer. Forms a ternary complex with ATG13 and ATG17.

It is found in the cytoplasm. Its subcellular location is the preautophagosomal structure membrane. It catalyses the reaction L-seryl-[protein] + ATP = O-phospho-L-seryl-[protein] + ADP + H(+). The catalysed reaction is L-threonyl-[protein] + ATP = O-phospho-L-threonyl-[protein] + ADP + H(+). Serine/threonine protein kinase involved in the cytoplasm to vacuole transport (Cvt) and found to be essential in autophagy, where it is required for the formation of autophagosomes. Involved in the clearance of protein aggregates which cannot be efficiently cleared by the proteasome. Required for selective autophagic degradation of the nucleus (nucleophagy) as well as for mitophagy which contributes to regulate mitochondrial quantity and quality by eliminating the mitochondria to a basal level to fulfill cellular energy requirements and preventing excess ROS production. Also involved in endoplasmic reticulum-specific autophagic process, in selective removal of ER-associated degradation (ERAD) substrates. Plays a key role in ATG9 and ATG23 cycling through the pre-autophagosomal structure and is necessary to promote ATG18 binding to ATG9 through phosphorylation of ATG9. Catalyzes phosphorylation of ATG4, decreasing the interaction between ATG4 and ATG8 and impairing deconjugation of PE-conjugated forms of ATG8. This Kluyveromyces lactis (strain ATCC 8585 / CBS 2359 / DSM 70799 / NBRC 1267 / NRRL Y-1140 / WM37) (Yeast) protein is Serine/threonine-protein kinase ATG1.